We begin with the raw amino-acid sequence, 131 residues long: Transcription antitermination protein NusB (131 aa).

It belongs to the NusB family.

Its function is as follows. Involved in transcription antitermination. Required for transcription of ribosomal RNA (rRNA) genes. Binds specifically to the boxA antiterminator sequence of the ribosomal RNA (rrn) operons. The sequence is that of Transcription antitermination protein NusB from Caldicellulosiruptor saccharolyticus (strain ATCC 43494 / DSM 8903 / Tp8T 6331).